Here is a 232-residue protein sequence, read N- to C-terminus: 5'-methylthioadenosine/S-adenosylhomocysteine nucleosidase (232 aa).

Glu12 functions as the Proton acceptor in the catalytic mechanism. Substrate contacts are provided by residues Gly78, Ile152, and 173 to 174 (ME). Residue Asp197 is the Proton donor of the active site.

It belongs to the PNP/UDP phosphorylase family. MtnN subfamily. Homodimer.

It catalyses the reaction S-adenosyl-L-homocysteine + H2O = S-(5-deoxy-D-ribos-5-yl)-L-homocysteine + adenine. The catalysed reaction is S-methyl-5'-thioadenosine + H2O = 5-(methylsulfanyl)-D-ribose + adenine. It carries out the reaction 5'-deoxyadenosine + H2O = 5-deoxy-D-ribose + adenine. It participates in amino-acid biosynthesis; L-methionine biosynthesis via salvage pathway; S-methyl-5-thio-alpha-D-ribose 1-phosphate from S-methyl-5'-thioadenosine (hydrolase route): step 1/2. Its function is as follows. Catalyzes the irreversible cleavage of the glycosidic bond in both 5'-methylthioadenosine (MTA) and S-adenosylhomocysteine (SAH/AdoHcy) to adenine and the corresponding thioribose, 5'-methylthioribose and S-ribosylhomocysteine, respectively. Also cleaves 5'-deoxyadenosine, a toxic by-product of radical S-adenosylmethionine (SAM) enzymes, into 5-deoxyribose and adenine. Thus, is required for in vivo function of the radical SAM enzymes biotin synthase and lipoic acid synthase, that are inhibited by 5'-deoxyadenosine accumulation. The protein is 5'-methylthioadenosine/S-adenosylhomocysteine nucleosidase of Escherichia coli O9:H4 (strain HS).